Consider the following 512-residue polypeptide: 2,3-bisphosphoglycerate-independent phosphoglycerate mutase (512 aa).

Positions 14 and 64 each coordinate Mn(2+). Residue S64 is the Phosphoserine intermediate of the active site. Residues H125, 155 to 156 (RD), R187, R193, 259 to 262 (RADR), and K332 contribute to the substrate site. Positions 399, 403, 440, 441, and 459 each coordinate Mn(2+).

Belongs to the BPG-independent phosphoglycerate mutase family. As to quaternary structure, monomer. Mn(2+) is required as a cofactor.

It carries out the reaction (2R)-2-phosphoglycerate = (2R)-3-phosphoglycerate. Its pathway is carbohydrate degradation; glycolysis; pyruvate from D-glyceraldehyde 3-phosphate: step 3/5. Its function is as follows. Catalyzes the interconversion of 2-phosphoglycerate and 3-phosphoglycerate. The protein is 2,3-bisphosphoglycerate-independent phosphoglycerate mutase of Ruthia magnifica subsp. Calyptogena magnifica.